Consider the following 217-residue polypeptide: 3,4-dihydroxy-2-butanone 4-phosphate synthase (217 aa).

Residues 37–38, aspartate 42, 150–154, and glutamate 174 contribute to the D-ribulose 5-phosphate site; these read RE and RGGHT. Residue glutamate 38 coordinates Mg(2+). Histidine 153 lines the Mg(2+) pocket.

This sequence belongs to the DHBP synthase family. In terms of assembly, homodimer. It depends on Mg(2+) as a cofactor. Mn(2+) serves as cofactor.

The catalysed reaction is D-ribulose 5-phosphate = (2S)-2-hydroxy-3-oxobutyl phosphate + formate + H(+). Its pathway is cofactor biosynthesis; riboflavin biosynthesis; 2-hydroxy-3-oxobutyl phosphate from D-ribulose 5-phosphate: step 1/1. In terms of biological role, catalyzes the conversion of D-ribulose 5-phosphate to formate and 3,4-dihydroxy-2-butanone 4-phosphate. The sequence is that of 3,4-dihydroxy-2-butanone 4-phosphate synthase from Enterobacter sp. (strain 638).